We begin with the raw amino-acid sequence, 46 residues long: Mu-segestritoxin-Sf1f (46 aa).

Cystine bridges form between Cys-3-Cys-19, Cys-10-Cys-22, Cys-18-Cys-42, and Cys-24-Cys-40. A keys region for toxin activity region spans residues 31-33 (RPW).

Belongs to the neurotoxin 16 (SFI) family. As to expression, expressed by the venom gland.

The protein resides in the secreted. Functionally, insecticidal toxin. It inhibits insect voltage-gated sodium channels (Nav) by partially blocking the channel pore in DUM neurons from the American cockroach, not by acting as a gating modifier. The inhibition is only partially reversible after prolonged washout. In vivo, the toxin causes flaccid paralysis followed by death when injected into Heliothis virescens larvae. It also causes uncoordinated movements followed by full paralysis to sheep blowflies (Lucilia cuprina). When the toxin is fused to snowdrop lectin, it is orally active against larvae of the tomato moth (Laconobia oleracea), the rice brown planthopper (Nilaparvata lugens), and the peach-potato aphid (Myzus persicae). This chain is Mu-segestritoxin-Sf1f, found in Segestria florentina (Tube-web spider).